Reading from the N-terminus, the 60-residue chain is Short neurotoxin 1 (60 aa).

Cystine bridges form between Cys-3-Cys-22, Cys-17-Cys-39, Cys-41-Cys-52, and Cys-53-Cys-58.

The protein belongs to the three-finger toxin family. Short-chain subfamily. Type I alpha-neurotoxin sub-subfamily. As to expression, expressed by the venom gland.

The protein localises to the secreted. Its function is as follows. Binds to muscle nicotinic acetylcholine receptor (nAChR) and inhibit acetylcholine from binding to the receptor, thereby impairing neuromuscular transmission. The sequence is that of Short neurotoxin 1 from Dendroaspis viridis (Western green mamba).